The sequence spans 343 residues: L-threonine 3-dehydrogenase (343 aa).

C39 contacts Zn(2+). Residues T41 and H44 each act as charge relay system in the active site. H64, E65, C94, C97, C100, and C108 together coordinate Zn(2+). NAD(+) contacts are provided by residues I176, D196, R201, 263-265, and 287-288; these read LGI and IY.

The protein belongs to the zinc-containing alcohol dehydrogenase family. Homotetramer. It depends on Zn(2+) as a cofactor.

The protein resides in the cytoplasm. It carries out the reaction L-threonine + NAD(+) = (2S)-2-amino-3-oxobutanoate + NADH + H(+). It functions in the pathway amino-acid degradation; L-threonine degradation via oxydo-reductase pathway; glycine from L-threonine: step 1/2. Its function is as follows. Catalyzes the NAD(+)-dependent oxidation of L-threonine to 2-amino-3-ketobutyrate. The sequence is that of L-threonine 3-dehydrogenase from Anaeromyxobacter sp. (strain Fw109-5).